Reading from the N-terminus, the 472-residue chain is UDP-N-acetylmuramate--L-alanine ligase (472 aa).

118 to 124 provides a ligand contact to ATP; sequence GTHGKTT.

It belongs to the MurCDEF family.

The protein resides in the cytoplasm. The catalysed reaction is UDP-N-acetyl-alpha-D-muramate + L-alanine + ATP = UDP-N-acetyl-alpha-D-muramoyl-L-alanine + ADP + phosphate + H(+). It participates in cell wall biogenesis; peptidoglycan biosynthesis. In terms of biological role, cell wall formation. The polypeptide is UDP-N-acetylmuramate--L-alanine ligase (Methylococcus capsulatus (strain ATCC 33009 / NCIMB 11132 / Bath)).